The sequence spans 339 residues: Large ribosomal subunit protein uL10 (339 aa).

The interval 300-339 (AAAQATPSVEEREEEEKPEEEEEEEEKEEEAIEGLGALFG) is disordered. Residues 310-331 (EREEEEKPEEEEEEEEKEEEAI) are compositionally biased toward acidic residues.

The protein belongs to the universal ribosomal protein uL10 family. As to quaternary structure, part of the 50S ribosomal subunit. Forms part of the ribosomal stalk which helps the ribosome interact with GTP-bound translation factors. Forms a heptameric L10(L12)2(L12)2(L12)2 complex, where L10 forms an elongated spine to which the L12 dimers bind in a sequential fashion.

In terms of biological role, forms part of the ribosomal stalk, playing a central role in the interaction of the ribosome with GTP-bound translation factors. This chain is Large ribosomal subunit protein uL10, found in Archaeoglobus fulgidus (strain ATCC 49558 / DSM 4304 / JCM 9628 / NBRC 100126 / VC-16).